Reading from the N-terminus, the 606-residue chain is DNA mismatch repair protein MutL (606 aa).

The tract at residues 350-371 is disordered; sequence GWRPSAPSAPWTPEASPSRPYQ.

It belongs to the DNA mismatch repair MutL/HexB family.

In terms of biological role, this protein is involved in the repair of mismatches in DNA. It is required for dam-dependent methyl-directed DNA mismatch repair. May act as a 'molecular matchmaker', a protein that promotes the formation of a stable complex between two or more DNA-binding proteins in an ATP-dependent manner without itself being part of a final effector complex. The polypeptide is DNA mismatch repair protein MutL (Rhizobium rhizogenes (strain K84 / ATCC BAA-868) (Agrobacterium radiobacter)).